The primary structure comprises 758 residues: Long-chain-alcohol oxidase FAO1 (758 aa).

2 helical membrane passes run 102–122 (IVLRILTFRLGTLLLCGLVCL) and 155–175 (PLARIGFMMIKAIFLFYYFTW). 246-261 (CDAVVVGSGCGGGVAA) contacts FAD. Catalysis depends on His-689, which acts as the Proton acceptor.

It belongs to the GMC oxidoreductase family.

The protein resides in the membrane. The catalysed reaction is a long-chain primary fatty alcohol + O2 = a long-chain fatty aldehyde + H2O2. Functionally, long-chain fatty alcohol oxidase involved in the omega-oxidation pathway of lipid degradation. This is Long-chain-alcohol oxidase FAO1 (FAO1) from Arabidopsis thaliana (Mouse-ear cress).